The chain runs to 806 residues: Plasminogen (806 aa).

Residues 1-19 (MEYGKVIFLFLLFLKSGQG) form the signal peptide. Residues 20–98 (ESLENYIKTE…RDVVLFEKRI (79 aa)) form the PAN domain. Disulfide bonds link Cys-49–Cys-73, Cys-53–Cys-61, Cys-103–Cys-181, Cys-124–Cys-164, Cys-152–Cys-176, Cys-185–Cys-262, Cys-188–Cys-316, Cys-206–Cys-245, Cys-234–Cys-257, Cys-275–Cys-352, Cys-296–Cys-335, Cys-324–Cys-347, Cys-371–Cys-448, Cys-392–Cys-431, Cys-420–Cys-443, Cys-476–Cys-555, Cys-497–Cys-538, Cys-526–Cys-550, Cys-563–Cys-681, Cys-573–Cys-581, and Cys-603–Cys-619. Kringle domains follow at residues 102–181 (DCKS…VPEC), 184–262 (ECMH…IPRC), 274–352 (QCLK…IPSC), 370–448 (ECYE…LEKC), and 475–555 (DCMY…IPQC). The region spanning 577 to 804 (IVGGCYAQPH…YISWIEDVMK (228 aa)) is the Peptidase S1 domain. Ser-593 is subject to Phosphoserine. Residues His-618 and Asp-661 each act as charge relay system in the active site. Phosphoserine is present on Ser-684. 3 disulfides stabilise this stretch: Cys-695–Cys-762, Cys-725–Cys-741, and Cys-752–Cys-780. Ser-756 serves as the catalytic Charge relay system.

Belongs to the peptidase S1 family. Plasminogen subfamily. Interacts with CSPG4 and AMOT. Interacts (via the Kringle domains) with HRG; the interaction tethers PLG to the cell surface and enhances its activation. Interacts (via Kringle 4 domain) with ADA; the interaction stimulates PLG activation when in complex with DPP4. Angiostatin: Interacts with ATP5F1A; the interaction inhibits most of the angiogenic effects of angiostatin. In the presence of the inhibitor, the activation involves only cleavage after Arg-576, yielding two chains held together by two disulfide bonds. In the absence of the inhibitor, the activation involves additionally the removal of the activation peptide.

It is found in the secreted. It carries out the reaction Preferential cleavage: Lys-|-Xaa &gt; Arg-|-Xaa, higher selectivity than trypsin. Converts fibrin into soluble products.. With respect to regulation, converted into plasmin by plasminogen activators, both plasminogen and its activator being bound to fibrin. Activated with catalytic amounts of streptokinase. Functionally, plasmin dissolves the fibrin of blood clots and acts as a proteolytic factor in a variety of other processes including embryonic development, tissue remodeling, tumor invasion, and inflammation. In ovulation, weakens the walls of the Graafian follicle. It activates the urokinase-type plasminogen activator, collagenases and several complement zymogens, such as C1, C4 and C5. Cleavage of fibronectin and laminin leads to cell detachment and apoptosis. Also cleaves fibrin, thrombospondin and von Willebrand factor. Its role in tissue remodeling and tumor invasion may be modulated by CSPG4. Binds to cells. The sequence is that of Plasminogen (PLG) from Notamacropus eugenii (Tammar wallaby).